A 553-amino-acid chain; its full sequence is Threonylcarbamoyladenosine tRNA methylthiotransferase (553 aa).

A disordered region spans residues 21-61; sequence SAEDVKPQERYQNKKSVTVRAKKRVQIKPETDAEEKPTPRP. Basic and acidic residues-rich tracts occupy residues 23–32 and 47–58; these read EDVKPQERYQ and IKPETDAEEKPT. The MTTase N-terminal domain occupies 72–179; that stretch reads QKVFVKTWGC…VVEVVEETLK (108 aa). [4Fe-4S] cluster is bound by residues C81, C116, C145, C221, C225, and C228. The 232-residue stretch at 207-438 folds into the Radical SAM core domain; it reads RKNPLIEIIS…DLFYSYEPYA (232 aa). In terms of domain architecture, TRAM spans 438 to 500; sequence AQRVGEMYTV…KFSMVGEILD (63 aa). Residues 533 to 553 traverse the membrane as a helical segment; sequence VGIALVVGSLAFLLQLLIRFL.

Belongs to the methylthiotransferase family. CDKAL1 subfamily. [4Fe-4S] cluster serves as cofactor.

It is found in the membrane. It catalyses the reaction N(6)-L-threonylcarbamoyladenosine(37) in tRNA + (sulfur carrier)-SH + AH2 + 2 S-adenosyl-L-methionine = 2-methylsulfanyl-N(6)-L-threonylcarbamoyladenosine(37) in tRNA + (sulfur carrier)-H + 5'-deoxyadenosine + L-methionine + A + S-adenosyl-L-homocysteine + 2 H(+). Functionally, catalyzes the methylthiolation of N6-threonylcarbamoyladenosine (t(6)A), leading to the formation of 2-methylthio-N6-threonylcarbamoyladenosine (ms(2)t(6)A) at position 37 in tRNAs that read codons beginning with adenine. The sequence is that of Threonylcarbamoyladenosine tRNA methylthiotransferase from Drosophila pseudoobscura pseudoobscura (Fruit fly).